The chain runs to 90 residues: Protein Z600 (90 aa).

Threonine 22 and threonine 48 each carry phosphothreonine. The tract at residues 46–65 (PATPSSSGHGKFQTELKKRR) is disordered.

As to quaternary structure, component of the Frs-CycA-Cdk1 complex composed of Z600, CycA and Cdk1. Interacts preferentially with CycA (via C-terminus) but is also able to interact (via C-terminus) with CycE (via C-terminus).

The protein localises to the nucleus. Functionally, cell cycle regulator that is involved in modulating and adjusting cell proliferation according to the requirements of the developmental program. Interacts with mitotic Cdk1-cyclin complexes to inhibit mitotic entry at the G2/M transition. Likely to function by binding to the hydrophobic patch of cyclins to interfere with the interaction between the complex and certain Cdk1 substrates. At the mid-blastula transition, involved in the cell cycle arrest in G2 of cycle 14 by delaying mitosis and thus reducing cell proliferation allowing cell fate specification and morphogenesis to take place. Acts downstream or in parallel to the checkpoint regulator grp which is also required for the cell cycle pause at cycle 14. During gastrulation, delays mitosis in the ventral region of the embryonic mesoderm thus allowing invagination to be completed before cell division takes place. The chain is Protein Z600 from Drosophila melanogaster (Fruit fly).